The following is a 215-amino-acid chain: RxLR effector protein PITG_00582 (215 aa).

An N-terminal signal peptide occupies residues 1-19; sequence MLPYKTLLLALGFFFTVQC. The RxLR-dEER signature appears at 39–51; the sequence is RLLRSPEKTDEER. Residues 81 to 149 are a coiled coil; it reads VAKQAKEMSN…QNELEKLAKQ (69 aa).

Belongs to the RxLR effector family.

It localises to the secreted. The protein localises to the host cell membrane. Effector that might be involved in host plant infection. The protein is RxLR effector protein PITG_00582 of Phytophthora infestans (strain T30-4) (Potato late blight agent).